Consider the following 107-residue polypeptide: Nucleoid-associated protein Atu0095 (107 aa).

The tract at residues Lys81–Phe107 is disordered. The segment covering Pro98–Phe107 has biased composition (pro residues).

The protein belongs to the YbaB/EbfC family. Homodimer.

The protein localises to the cytoplasm. It is found in the nucleoid. Binds to DNA and alters its conformation. May be involved in regulation of gene expression, nucleoid organization and DNA protection. The protein is Nucleoid-associated protein Atu0095 of Agrobacterium fabrum (strain C58 / ATCC 33970) (Agrobacterium tumefaciens (strain C58)).